We begin with the raw amino-acid sequence, 529 residues long: uncharacterized protein (529 aa).

ATP contacts are provided by residues 178-186 (TSGTTGQPK), D401, R416, and K510.

The protein belongs to the ATP-dependent AMP-binding enzyme family.

This is an uncharacterized protein from Bacillus subtilis (strain 168).